Reading from the N-terminus, the 214-residue chain is uncharacterized protein (214 aa).

The signal sequence occupies residues 1–18; the sequence is MTMYIGLILVVLATFCQG. N-linked (GlcNAc...) asparagine; by host glycosylation occurs at Asn-64.

This is an uncharacterized protein from Magallana gigas (Pacific oyster).